The chain runs to 298 residues: Acetylglutamate kinase (298 aa).

Substrate contacts are provided by residues 66 to 67 (GG), arginine 88, and asparagine 193.

Belongs to the acetylglutamate kinase family. ArgB subfamily.

Its subcellular location is the cytoplasm. It catalyses the reaction N-acetyl-L-glutamate + ATP = N-acetyl-L-glutamyl 5-phosphate + ADP. Its pathway is amino-acid biosynthesis; L-arginine biosynthesis; N(2)-acetyl-L-ornithine from L-glutamate: step 2/4. In terms of biological role, catalyzes the ATP-dependent phosphorylation of N-acetyl-L-glutamate. This Methanosphaera stadtmanae (strain ATCC 43021 / DSM 3091 / JCM 11832 / MCB-3) protein is Acetylglutamate kinase.